Consider the following 554-residue polypeptide: ATP-dependent RNA helicase MRH4, mitochondrial (554 aa).

The transit peptide at M1 to A54 directs the protein to the mitochondrion. The Q motif motif lies at D119–Q140. The Helicase ATP-binding domain maps to T150–V337. A163–T170 contacts ATP. The short motif at D285–D288 is the DEAD box element. In terms of domain architecture, Helicase C-terminal spans A368–Q554. A disordered region spans residues R439–S474. The span at R445–L457 shows a compositional bias: basic and acidic residues.

This sequence belongs to the DEAD box helicase family. MRH4 subfamily.

It is found in the mitochondrion. It catalyses the reaction ATP + H2O = ADP + phosphate + H(+). In terms of biological role, ATP-binding RNA helicase involved in mitochondrial RNA metabolism. Required for maintenance of mitochondrial DNA. This Eremothecium gossypii (strain ATCC 10895 / CBS 109.51 / FGSC 9923 / NRRL Y-1056) (Yeast) protein is ATP-dependent RNA helicase MRH4, mitochondrial (MRH4).